The primary structure comprises 123 residues: DNA-directed RNA polymerase I subunit RPA12 (123 aa).

Zn(2+)-binding residues include Cys-17, Cys-20, Cys-35, Cys-38, Cys-84, and Cys-87. The C4-type zinc finger occupies 17 to 38 (CPDCGSVLPLPGVQDTVICPRC). Residues 80 to 120 (VDRRCSRCGHEGMAYYTRQMRSADEGQTVFYTCINCKFQEK) form a TFIIS-type zinc finger. The short motif at 103-104 (DE) is the Hairpin element. Positions 112 and 115 each coordinate Zn(2+).

Belongs to the archaeal RpoM/eukaryotic RPA12/RPB9/RPC11 RNA polymerase family. Component of the RNA polymerase I (Pol I) complex consisting of 13 subunits: a ten-subunit catalytic core composed of POLR1A/RPA1, POLR1B/RPA2, POLR1C/RPAC1, POLR1D/RPAC2, POLR1H/RPA12, POLR2E/RPABC1, POLR2F/RPABC2, POLR2H/RPABC3, POLR2K/RPABC4 and POLR2L/RPABC5; a mobile stalk subunit POLR1F/RPA43 protruding from the core and additional subunits homologous to general transcription factors POLR1E/RPA49 and POLR1G/RPA34. Part of Pol I pre-initiation complex (PIC), in which Pol I core assembles with RRN3 and promoter-bound UTBF and SL1/TIF-IB complex.

It is found in the nucleus. It localises to the nucleolus. Core component of RNA polymerase I (Pol I), a DNA-dependent RNA polymerase which synthesizes ribosomal RNA precursors using the four ribonucleoside triphosphates as substrates. Can mediate Pol I proofreading of the nascent RNA transcript. Anchors into the Pol I active site to monitor transcription fidelity and cleave mis-incorporated 5'-ribonucleotides. In Rattus norvegicus (Rat), this protein is DNA-directed RNA polymerase I subunit RPA12.